Reading from the N-terminus, the 122-residue chain is Large ribosomal subunit protein uL22 (122 aa).

The protein belongs to the universal ribosomal protein uL22 family. As to quaternary structure, part of the 50S ribosomal subunit.

Its function is as follows. This protein binds specifically to 23S rRNA; its binding is stimulated by other ribosomal proteins, e.g. L4, L17, and L20. It is important during the early stages of 50S assembly. It makes multiple contacts with different domains of the 23S rRNA in the assembled 50S subunit and ribosome. In terms of biological role, the globular domain of the protein is located near the polypeptide exit tunnel on the outside of the subunit, while an extended beta-hairpin is found that lines the wall of the exit tunnel in the center of the 70S ribosome. This Thermosynechococcus vestitus (strain NIES-2133 / IAM M-273 / BP-1) protein is Large ribosomal subunit protein uL22.